Reading from the N-terminus, the 640-residue chain is 5-aminolevulinate synthase, non-specific, mitochondrial (640 aa).

The N-terminal 56 residues, 1-56 (METVVRSCPFLSRVPQAFLQKAGKSLLFYAQNCPKMMEVGAKPAPRALSTAAVHYQ), are a transit peptide targeting the mitochondrion. Disordered regions lie at residues 60–103 (ETPP…TSQG) and 143–163 (EVAE…GGDP). Residues 75–92 (VQQTPDGSQQSPDGTQLP) show a composition bias toward polar residues. Substrate is bound by residues Arg217, Ser334, and Lys353. The pyridoxal 5'-phosphate site is built by Ser386, His414, and Thr442. The active site involves Lys445. Lys445 carries the post-translational modification N6-(pyridoxal phosphate)lysine. Pyridoxal 5'-phosphate contacts are provided by Thr474 and Thr475. Thr562 serves as a coordination point for substrate. Pro576 is modified (hydroxyproline).

It belongs to the class-II pyridoxal-phosphate-dependent aminotransferase family. Homodimer. Interacts (hydroxylated form) with VHL. Pyridoxal 5'-phosphate is required as a cofactor. Post-translationally, in normoxia, is hydroxylated at Pro-576, promoting interaction with VHL, initiating ubiquitination and subsequent degradation via the proteasome. Ubiquitinated; in normoxia following hydroxylation and interaction with VHL, leading to its subsequent degradation via the proteasome.

The protein localises to the mitochondrion inner membrane. It catalyses the reaction succinyl-CoA + glycine + H(+) = 5-aminolevulinate + CO2 + CoA. The protein operates within porphyrin-containing compound metabolism; protoporphyrin-IX biosynthesis; 5-aminolevulinate from glycine: step 1/1. Catalyzes the pyridoxal 5'-phosphate (PLP)-dependent condensation of succinyl-CoA and glycine to form aminolevulinic acid (ALA), with CoA and CO2 as by-products. This Pongo abelii (Sumatran orangutan) protein is 5-aminolevulinate synthase, non-specific, mitochondrial (ALAS1).